A 349-amino-acid polypeptide reads, in one-letter code: MDENQKKSLELAIKQIDKAFGKGTLIRLGDKEVIPVETISTGSLGLDLALGVGGLPRGRVIEIYGPESSGKTTLTLHAIAEAQKAGGVCAFIDAEHALDVKYAKEIGVDTDNLLVSQPDFGEQALEILETVIRSGAVDLVVVDSVAALTPKVEIDGDMDDQQVGVQARLMSKALRKVTGLLSKMNCTVIFINQIRMKIGMTGYGSPETTTGGNALKFYSSVRLDIRRIATLKQGENSIGNRVKVKVVKNKVAAPFKQAEFDIMFGEGISKTGELVDYGVKLDIVDKAGAWFSYGDSKIGQGRENSKVFLKDNPEVAREIENKILESMGVNDELITSGTDDSDDISGLDD.

An ATP-binding site is contributed by 65 to 72 (GPESSGKT).

The protein belongs to the RecA family.

It is found in the cytoplasm. Can catalyze the hydrolysis of ATP in the presence of single-stranded DNA, the ATP-dependent uptake of single-stranded DNA by duplex DNA, and the ATP-dependent hybridization of homologous single-stranded DNAs. It interacts with LexA causing its activation and leading to its autocatalytic cleavage. The protein is Protein RecA of Aliarcobacter butzleri (strain RM4018) (Arcobacter butzleri).